The chain runs to 346 residues: MHISAPHFWWKNKSFLRFLLAPISWGYGYFSCRFMGRQPPVIDLPVLCIGNFTCGGTGKTPVVIAFAKVAKELGFVPGVVSRGYGGAVKGVHLVNEKYDTARDVGDEALLLAQHAFVAVSANRYAAAQRLKKEGCNLILMDDGFQSRRLYMDYTLLVVDAMRGFGNGAVFPAGPLRVPLKTQFSFMDSVLLIGHSDARDNVSFLIARTGKPLHRAHLKARASDEVAGKSFLAFAGIGNPDKFFQSIKELSGHVVQTYTYPDHYFFTDKNLTSLVQKAQMYNLWLATTAKDYIRIQTIHERKDLKNLIVFDVDVDFVQKDFCRMLLEEVITRFRKRSCEFSCAKGKG.

Residue 53-60 participates in ATP binding; it reads TCGGTGKT.

The protein belongs to the LpxK family.

It catalyses the reaction a lipid A disaccharide + ATP = a lipid IVA + ADP + H(+). It functions in the pathway glycolipid biosynthesis; lipid IV(A) biosynthesis; lipid IV(A) from (3R)-3-hydroxytetradecanoyl-[acyl-carrier-protein] and UDP-N-acetyl-alpha-D-glucosamine: step 6/6. Functionally, transfers the gamma-phosphate of ATP to the 4'-position of a tetraacyldisaccharide 1-phosphate intermediate (termed DS-1-P) to form tetraacyldisaccharide 1,4'-bis-phosphate (lipid IVA). The polypeptide is Tetraacyldisaccharide 4'-kinase (Bartonella tribocorum (strain CIP 105476 / IBS 506)).